A 284-amino-acid chain; its full sequence is MGVQANTRAIEKDIVTDFSERMSYASYLDLDTLLSAQKPVSRPEHHDELLFIIQHQTTELWLKLVLHETLAARAAFDEDDIGRALKCVARVKHIQKTLTEQWSVLATLTPTEYSEFRRFLGNSSGFQSYQYRAVEFVLGNKNAGMLAVFEADPAAHDLLGRLLAEPSLYDAFWQCLSRLGYDVPASALDRDVTAAYTLNEDLLPLIKFVYENHDEHWAVYEAFEEFVDLEENFQLWRFRHMRTVLRTIGMKSGTGGSSGVGFLQKALDLTFFPELLAVRTEIGR.

Substrate is bound by residues 51 to 55 (FIIQH), tyrosine 113, and arginine 117. Histidine 240 lines the heme pocket. Residue threonine 254 coordinates substrate.

This sequence belongs to the tryptophan 2,3-dioxygenase family. In terms of assembly, homotetramer. Heme is required as a cofactor.

It carries out the reaction L-tryptophan + O2 = N-formyl-L-kynurenine. It functions in the pathway amino-acid degradation; L-tryptophan degradation via kynurenine pathway; L-kynurenine from L-tryptophan: step 1/2. Heme-dependent dioxygenase that catalyzes the oxidative cleavage of the L-tryptophan (L-Trp) pyrrole ring and converts L-tryptophan to N-formyl-L-kynurenine. Catalyzes the oxidative cleavage of the indole moiety. This chain is Tryptophan 2,3-dioxygenase, found in Rhodococcus jostii (strain RHA1).